Here is a 209-residue protein sequence, read N- to C-terminus: MSTSLPLRDDGAVRASFALALFVLLGLGLGYSLVATGITSALMPDQAHGSLLRADGRVIGSSLVAQPFADARYFQPRPSAAKYDPTAAAGSNQARSNPELLARIATARAEIAQRDGIAPDAVPGELLTQSGSGLDPHLSPAGAQVQLRRVAAARGWPEQRVAALLQAATEQPQFGLLGQPRINVLALNLALDRAGDGVPGTENGVEQQR.

Residues 18 to 38 (ALALFVLLGLGLGYSLVATGI) traverse the membrane as a helical segment.

It belongs to the KdpC family. The system is composed of three essential subunits: KdpA, KdpB and KdpC.

It localises to the cell inner membrane. Its function is as follows. Part of the high-affinity ATP-driven potassium transport (or Kdp) system, which catalyzes the hydrolysis of ATP coupled with the electrogenic transport of potassium into the cytoplasm. This subunit acts as a catalytic chaperone that increases the ATP-binding affinity of the ATP-hydrolyzing subunit KdpB by the formation of a transient KdpB/KdpC/ATP ternary complex. The sequence is that of Potassium-transporting ATPase KdpC subunit from Xanthomonas campestris pv. campestris (strain 8004).